Reading from the N-terminus, the 451-residue chain is Vitamin D3 receptor (451 aa).

The segment at residues 44–112 (PRICGVCGDR…RLKRCVDIGM (69 aa)) is a DNA-binding region (nuclear receptor). Zn(2+) contacts are provided by Cys-47, Cys-50, Cys-64, Cys-67, Cys-83, Cys-89, Cys-99, and Cys-102. NR C4-type zinc fingers lie at residues 47-67 (CGVC…CEGC) and 83-107 (CPFN…LKRC). Hinge stretches follow at residues 113–149 (MKEF…KLSE) and 120–149 (DEEV…KLSE). Residues 150 to 447 (EQQKVIDTLL…LTPLVLEVFG (298 aa)) enclose the NR LBD domain. Ser-261 contributes to the calcitriol binding site. An interaction with coactivator LXXLL motif region spans residues 270–288 (KMIPGFRDLTAEDQIALLK). Calcitriol is bound by residues Arg-298, Ser-302, His-329, and His-421. Positions 440–448 (PLVLEVFGN) match the 9aaTAD motif.

This sequence belongs to the nuclear hormone receptor family. NR1 subfamily. Homodimer in the absence of bound vitamin D3. Heterodimer with RXRA after vitamin D3 binding. Expressed in kidney and intestine.

The protein localises to the nucleus. Its subcellular location is the cytoplasm. In terms of biological role, nuclear receptor for calcitriol, the active form of vitamin D3 which mediates the action of this vitamin on cells. Enters the nucleus upon vitamin D3 binding where it forms heterodimers with the retinoid X receptor/RXR. The VDR-RXR heterodimers bind to specific response elements on DNA and activate the transcription of vitamin D3-responsive target genes. Plays a central role in calcium homeostasis. Also functions as a receptor for the secondary bile acid lithocholic acid (LCA) and its metabolites. The polypeptide is Vitamin D3 receptor (VDR) (Gallus gallus (Chicken)).